Consider the following 507-residue polypeptide: Phosphoprotein (507 aa).

Residues 56–79 (DHQDISKPCFPAAGPGKSSMSRCH) form a disordered region. 2 positions are modified to phosphoserine: S86 and S151. Over residues 137-160 (DGVEVWGGDEESENSDVDSGEPDP) the composition is skewed to acidic residues. The segment at 137–307 (DGVEVWGGDE…QSNIEPEDDY (171 aa)) is disordered. Basic and acidic residues-rich tracts occupy residues 189 to 199 (EIQKLLEDQSR) and 222 to 233 (TASEKPIKKGTD). Composition is skewed to low complexity over residues 236–252 (STSSGTMAESSSTGGAT) and 266–278 (NASAENALASASN). Residues 279-301 (VSPTQGSKTESGTTTSRISQSNI) are compositionally biased toward polar residues. A multimerization region spans residues 304 to 376 (EDDYDDELFS…LSSFMIAIPG (73 aa)). Residues 459–507 (ASRSVIRSIIKSSHLGEDRKDYLMSLLNDIQGSKDLAQFHQMLVKILKN) form an interaction with the nucleocapsid (N-RNA) region.

It belongs to the morbillivirus P protein family. As to quaternary structure, homotetramer. Interacts (via multimerization domain) with polymerase L; this interaction forms the polymerase L-P complex. Interacts (via N-terminus) with N0 (via Ncore); this interaction allows P to chaperon N0 to avoid N polymerization before encapsidation. Interacts (via C-terminus) with N-RNA template; this interaction positions the polymerase on the template for both transcription and replication. In terms of processing, phosphorylation on serines by host CK2 is necessary for the formation of viral factories.

Functionally, essential cofactor of the RNA polymerase L that plays a central role in the transcription and replication by forming the polymerase complex with RNA polymerase L and recruiting L to the genomic N-RNA template for RNA synthesis. Also plays a central role in the encapsidation of nascent RNA chains by forming the encapsidation complex with the nucleocapsid protein N (N-P complex). Acts as a chaperone for newly synthesized free N protein, so-called N0, allowing encapsidation of nascent RNA chains during replication. The nucleoprotein protein N prevents excessive phosphorylation of P, which leads to down-regulation of viral transcription/ replication. Participates, together with N, in the formation of viral factories (viroplasms), which are large inclusions in the host cytoplasm where replication takes place. The chain is Phosphoprotein (P/V) from Bos indicus (Zebu).